We begin with the raw amino-acid sequence, 334 residues long: Holliday junction branch migration complex subunit RuvB (334 aa).

A large ATPase domain (RuvB-L) region spans residues 4–184 (ADRLIQPQLQ…FGIPLRLEFY (181 aa)). Residues Arg-24, Gly-65, Lys-68, Thr-69, Thr-70, 131–133 (EDY), Arg-174, Tyr-184, and Arg-221 each bind ATP. Thr-69 contacts Mg(2+). The tract at residues 185-255 (NIKDLSTIVT…VADHALDLLD (71 aa)) is small ATPAse domain (RuvB-S). A head domain (RuvB-H) region spans residues 258 to 334 (NEGFDYMDRK…YQHFQLIKPE (77 aa)). 3 residues coordinate DNA: Arg-294, Arg-313, and Arg-318.

It belongs to the RuvB family. As to quaternary structure, homohexamer. Forms an RuvA(8)-RuvB(12)-Holliday junction (HJ) complex. HJ DNA is sandwiched between 2 RuvA tetramers; dsDNA enters through RuvA and exits via RuvB. An RuvB hexamer assembles on each DNA strand where it exits the tetramer. Each RuvB hexamer is contacted by two RuvA subunits (via domain III) on 2 adjacent RuvB subunits; this complex drives branch migration. In the full resolvosome a probable DNA-RuvA(4)-RuvB(12)-RuvC(2) complex forms which resolves the HJ.

It localises to the cytoplasm. It catalyses the reaction ATP + H2O = ADP + phosphate + H(+). In terms of biological role, the RuvA-RuvB-RuvC complex processes Holliday junction (HJ) DNA during genetic recombination and DNA repair, while the RuvA-RuvB complex plays an important role in the rescue of blocked DNA replication forks via replication fork reversal (RFR). RuvA specifically binds to HJ cruciform DNA, conferring on it an open structure. The RuvB hexamer acts as an ATP-dependent pump, pulling dsDNA into and through the RuvAB complex. RuvB forms 2 homohexamers on either side of HJ DNA bound by 1 or 2 RuvA tetramers; 4 subunits per hexamer contact DNA at a time. Coordinated motions by a converter formed by DNA-disengaged RuvB subunits stimulates ATP hydrolysis and nucleotide exchange. Immobilization of the converter enables RuvB to convert the ATP-contained energy into a lever motion, pulling 2 nucleotides of DNA out of the RuvA tetramer per ATP hydrolyzed, thus driving DNA branch migration. The RuvB motors rotate together with the DNA substrate, which together with the progressing nucleotide cycle form the mechanistic basis for DNA recombination by continuous HJ branch migration. Branch migration allows RuvC to scan DNA until it finds its consensus sequence, where it cleaves and resolves cruciform DNA. This chain is Holliday junction branch migration complex subunit RuvB, found in Shewanella putrefaciens (strain CN-32 / ATCC BAA-453).